Here is a 515-residue protein sequence, read N- to C-terminus: UPF0053 protein BUsg_314 (515 aa).

7 helical membrane passes run 14–34, 49–69, 79–99, 125–145, 150–170, 185–205, and 207–227; these read LTLVVLEVVLGIDNLIFVAIL, IGLGLALIMRLALLSLISWVV, NFFSLSIRDLILLIGGLFLLF, FWAVVIQIVVLDAVFSLDAII, MVNQLLIMMIAVVLATILMLL, VVVLCLSFLLMIGFSLVAEAL, and FYIPKGYLYAAIGFSILIEIF. 2 consecutive CBS domains span residues 309 to 368 and 372 to 432; these read MTPR…NIDV and ASQI…DADE.

This sequence belongs to the UPF0053 family.

The protein localises to the cell membrane. The polypeptide is UPF0053 protein BUsg_314 (Buchnera aphidicola subsp. Schizaphis graminum (strain Sg)).